A 423-amino-acid polypeptide reads, in one-letter code: MIDYKINEILVKQLNDDYNCSICVDPVLNSLPLEQHQALSCKNGHLLCQACWGKQLALRKECCICKIKVESISELCRNIFLEKGFRNKKVHCPNGFENFKVDEKLIKDESDGCKSVITIDQLESHLRECEFVFIECPNDPIRCKDKFRKNQTDKHMNKCQYVTINCEHCKEPVIKNDMPTHIENDCSIISLECEFCKDKFGRRSLENHIANECPNVVIDCPHKEGGCTARIKRCYLSQHLTEEDNHIRYMQKIIEKHRIQVEESDRIIKKLRVDYKELEKRVEITSRYKGNWTIENWSQKLTHYPNNERLKSPYFCIGSKSFYVGLYPNGFNQTNAGFMSIFLHLYEKPSTSTTVVRFSFELLHSDPTKSLKFEKSNKYTENKGSGFSQFIDIKMINNFIIDGKLTINIDVEVIPPSSSLVTK.

The segment at 20–66 (CSICVDPVLNSLPLEQHQALSCKNGHLLCQACWGKQLALRKECCICK) adopts an RING-type; degenerate zinc-finger fold. TRAF-type zinc fingers lie at residues 124–179 (SHLR…NDMP) and 180–237 (THIE…CYLS). Residues 287–411 (RYKGNWTIEN…DGKLTINIDV (125 aa)) enclose the MATH domain.

Belongs to the TNF receptor-associated factor family. A subfamily.

It is found in the cytoplasm. In terms of biological role, probable adapter protein and signal transducer that links members of the tumor necrosis factor receptor family to different signaling pathways by association with the receptor cytoplasmic domain and kinases. This chain is TNF receptor-associated factor family protein DDB_G0277243, found in Dictyostelium discoideum (Social amoeba).